Here is a 183-residue protein sequence, read N- to C-terminus: Large ribosomal subunit protein bL32m (183 aa).

Residues Cys99, Cys102, Cys112, and Cys115 each contribute to the Zn(2+) site.

This sequence belongs to the bacterial ribosomal protein bL32 family. In terms of assembly, component of the mitochondrial large ribosomal subunit (mt-LSU).

It localises to the mitochondrion. Its function is as follows. Component of the mitochondrial large ribosomal subunit (mt-LSU). The mitochondrial ribosome (mitoribosome) is a large ribonucleoprotein complex responsible for the synthesis of proteins inside mitochondria. In Caenorhabditis elegans, this protein is Large ribosomal subunit protein bL32m (mrpl-32).